Consider the following 297-residue polypeptide: MSSAHFNRGPAYGLSAEVKNKLAQKYDHQREQELREWIEGVTGRRIGNNFMDGLKDGIILCEFINKLQPGSVKKVNESTQNWHQLENIGNFIKAITKYGVKPHDIFEANDLFENTNHTQVQSTLLALASMAKTKGNKVNVGVKYAEKQERRFEPEKLREGRNIIGLQMGTNKFASQQGMTAYGTRRHLYDPKLGTDQPLDQATISLQMGTNKGASQAGMTAPGTKRQIFEPGLGMEHCDTLNVSLQMGSNKGASQRGMTVYGLPRQVYDPKYCLNPEYPELSEPTHNHHPHNYYNSA.

In terms of domain architecture, Calponin-homology (CH) spans 28–131; the sequence is HQREQELREW…STLLALASMA (104 aa). Calponin-like repeat units lie at residues 164–189, 204–229, and 243–268; these read IGLQ…RHLY, ISLQ…RQIF, and VSLQ…RQVY. Thr-170 carries the phosphothreonine; by ROCK2 modification. The residue at position 175 (Ser-175) is a Phosphoserine; by ROCK2. Thr-180 and Thr-184 each carry phosphothreonine; by ROCK2. At Thr-259 the chain carries Phosphothreonine; by ROCK2.

It belongs to the calponin family. In terms of assembly, part of cGMP kinase signaling complex at least composed of ACTA2/alpha-actin, CNN1/calponin H1, PLN/phospholamban, PRKG1 and ITPR1. Smooth muscle, and tissues containing significant amounts of smooth muscle.

Thin filament-associated protein that is implicated in the regulation and modulation of smooth muscle contraction. It is capable of binding to actin, calmodulin and tropomyosin. The interaction of calponin with actin inhibits the actomyosin Mg-ATPase activity. In Mus musculus (Mouse), this protein is Calponin-1 (Cnn1).